Consider the following 147-residue polypeptide: Lysozyme C (147 aa).

The signal sequence occupies residues 1–18 (MKALVILGFLFLSVAVQG). Residues 19-147 (KVFERCELAR…VSSYVEGCTL (129 aa)) form the C-type lysozyme domain. 4 disulfide bridges follow: Cys-24/Cys-145, Cys-48/Cys-133, Cys-83/Cys-99, and Cys-95/Cys-113. Active-site residues include Glu-53 and Asp-71.

The protein belongs to the glycosyl hydrolase 22 family. As to quaternary structure, monomer. As to expression, stomach-specific.

The catalysed reaction is Hydrolysis of (1-&gt;4)-beta-linkages between N-acetylmuramic acid and N-acetyl-D-glucosamine residues in a peptidoglycan and between N-acetyl-D-glucosamine residues in chitodextrins.. In terms of biological role, lysozymes have primarily a bacteriolytic function; those in tissues and body fluids are associated with the monocyte-macrophage system and enhance the activity of immunoagents. The polypeptide is Lysozyme C (LYZ1) (Bos taurus (Bovine)).